The chain runs to 146 residues: Transcriptional regulator MraZ (146 aa).

SpoVT-AbrB domains lie at 5 to 52 (SAAL…PRAE) and 81 to 124 (AAEI…KEES).

This sequence belongs to the MraZ family. Forms oligomers.

It is found in the cytoplasm. It localises to the nucleoid. This chain is Transcriptional regulator MraZ, found in Alcanivorax borkumensis (strain ATCC 700651 / DSM 11573 / NCIMB 13689 / SK2).